Consider the following 469-residue polypeptide: Abscisic acid 8'-hydroxylase CYP707A2 (469 aa).

A helical transmembrane segment spans residues F3–I23. C414 contributes to the heme binding site.

The protein belongs to the cytochrome P450 family. Heme is required as a cofactor. Expressed at low levels in fruit.

It is found in the membrane. The catalysed reaction is 2-cis-(+)-abscisate + reduced [NADPH--hemoprotein reductase] + O2 = (+)-8'-hydroxyabscisate + oxidized [NADPH--hemoprotein reductase] + H2O + H(+). Its pathway is plant hormone degradation; abscisic acid degradation. Functionally, negative regulator of fruit ripening involved in the oxidative degradation of abscisic acid (ABA). The protein is Abscisic acid 8'-hydroxylase CYP707A2 of Solanum lycopersicum (Tomato).